A 391-amino-acid polypeptide reads, in one-letter code: Phosphoglycerate kinase (391 aa).

Residues 21 to 23 (DLN), Arg36, 59 to 62 (HLGR), Arg113, and Arg146 contribute to the substrate site. Residues Lys197, Glu319, and 345 to 348 (GGDT) each bind ATP.

This sequence belongs to the phosphoglycerate kinase family. In terms of assembly, monomer.

The protein resides in the cytoplasm. It catalyses the reaction (2R)-3-phosphoglycerate + ATP = (2R)-3-phospho-glyceroyl phosphate + ADP. Its pathway is carbohydrate degradation; glycolysis; pyruvate from D-glyceraldehyde 3-phosphate: step 2/5. The chain is Phosphoglycerate kinase from Xylella fastidiosa (strain Temecula1 / ATCC 700964).